The primary structure comprises 151 residues: Small ribosomal subunit protein uS11A (151 aa).

The tract at residues 131 to 151 is disordered; that stretch reads DVTPIPSDSTRRKGGRRGRRL. Positions 142–151 are enriched in basic residues; that stretch reads RKGGRRGRRL.

It belongs to the universal ribosomal protein uS11 family.

This is Small ribosomal subunit protein uS11A from Drosophila melanogaster (Fruit fly).